A 247-amino-acid chain; its full sequence is Carboxy-S-adenosyl-L-methionine synthase (247 aa).

Residues Tyr-39, 64-66 (GCS), 89-90 (DN), 117-118 (DI), Asn-132, and Arg-199 contribute to the S-adenosyl-L-methionine site.

It belongs to the class I-like SAM-binding methyltransferase superfamily. Cx-SAM synthase family. In terms of assembly, homodimer.

The catalysed reaction is prephenate + S-adenosyl-L-methionine = carboxy-S-adenosyl-L-methionine + 3-phenylpyruvate + H2O. In terms of biological role, catalyzes the conversion of S-adenosyl-L-methionine (SAM) to carboxy-S-adenosyl-L-methionine (Cx-SAM). This chain is Carboxy-S-adenosyl-L-methionine synthase, found in Escherichia coli O127:H6 (strain E2348/69 / EPEC).